Consider the following 419-residue polypeptide: Gamma-glutamyl phosphate reductase (419 aa).

The protein belongs to the gamma-glutamyl phosphate reductase family.

It is found in the cytoplasm. The catalysed reaction is L-glutamate 5-semialdehyde + phosphate + NADP(+) = L-glutamyl 5-phosphate + NADPH + H(+). It participates in amino-acid biosynthesis; L-proline biosynthesis; L-glutamate 5-semialdehyde from L-glutamate: step 2/2. Catalyzes the NADPH-dependent reduction of L-glutamate 5-phosphate into L-glutamate 5-semialdehyde and phosphate. The product spontaneously undergoes cyclization to form 1-pyrroline-5-carboxylate. This is Gamma-glutamyl phosphate reductase from Yersinia pseudotuberculosis serotype O:1b (strain IP 31758).